A 319-amino-acid polypeptide reads, in one-letter code: Structure-specific endonuclease subunit SLX1 (319 aa).

The 84-residue stretch at 20-103 folds into the GIY-YIG domain; that stretch reads TFYCCYLLQS…QHGYKTHYIP (84 aa). An SLX1-type zinc finger spans residues 233-297; sequence CNLCGQCYDY…LPNFCMCPGC (65 aa).

This sequence belongs to the SLX1 family. Forms a heterodimer with SLX4. A divalent metal cation serves as cofactor.

It is found in the nucleus. Functionally, catalytic subunit of the SLX1-SLX4 structure-specific endonuclease that resolves DNA secondary structures generated during DNA repair and recombination. Has endonuclease activity towards branched DNA substrates, introducing single-strand cuts in duplex DNA close to junctions with ss-DNA. This is Structure-specific endonuclease subunit SLX1 from Vanderwaltozyma polyspora (strain ATCC 22028 / DSM 70294 / BCRC 21397 / CBS 2163 / NBRC 10782 / NRRL Y-8283 / UCD 57-17) (Kluyveromyces polysporus).